The sequence spans 199 residues: 5'-deoxynucleotidase YfbR (199 aa).

Residues 18–19 (RW) and His-33 contribute to the substrate site. One can recognise an HD domain in the interval 30–142 (VSEHSLQVAM…VKQADALCAY (113 aa)). A divalent metal cation contacts are provided by His-33, His-68, and Asp-69. Residues Asp-69, 77–80 (DLPT), and Asp-137 contribute to the substrate site. A divalent metal cation is bound at residue Asp-137.

The protein belongs to the 5DNU family. As to quaternary structure, homodimer. A divalent metal cation serves as cofactor.

It is found in the cytoplasm. It carries out the reaction a 2'-deoxyribonucleoside 5'-phosphate + H2O = a 2'-deoxyribonucleoside + phosphate. Functionally, catalyzes the strictly specific dephosphorylation of 2'-deoxyribonucleoside 5'-monophosphates. This is 5'-deoxynucleotidase YfbR from Shigella boydii serotype 18 (strain CDC 3083-94 / BS512).